Reading from the N-terminus, the 68-residue chain is Venom-like beta-defensin (68 aa).

An N-terminal signal peptide occupies residues 1-24 (MRLLILFLAVVTLLSLAGPGSAEV). 3 disulfides stabilise this stretch: cysteine 33–cysteine 60, cysteine 40–cysteine 54, and cysteine 47–cysteine 61.

As to expression, highly expressed in intestine, liver and spleen and expressed at lower levels in brain, kidney, lung, testis and venom gland.

It is found in the secreted. Functionally, potent antimicrobial peptide that displays activity against S.aureus and P.aeruginosa. Does not inhibit growth of E.coli. The sequence is that of Venom-like beta-defensin from Ornithorhynchus anatinus (Duckbill platypus).